The chain runs to 494 residues: SNF1-related protein kinase catalytic subunit alpha KIN12 (494 aa).

A Protein kinase domain is found at 19–270 (YRIGKTLGHG…ITEIRQHPWF (252 aa)). ATP is bound by residues 25–33 (LGHGSFAKV) and Lys-48. The active-site Proton acceptor is the Asp-142. Thr-175 carries the post-translational modification Phosphothreonine. The tract at residues 289–386 (AKKIEEEIIQ…GLKSNVKDDK (98 aa)) is auto-inhibitory domain (AID). The region spanning 291 to 331 (KIEEEIIQNVVNIGFDRNHVVDSLANRIQNEATVAYHLILD) is the UBA domain. The regulatory domain (RD) stretch occupies residues 293–494 (EEEIIQNVVN…VAFLRELGVL (202 aa)). Residues 387-494 (TWTLGLQSQG…VAFLRELGVL (108 aa)) form a PPI region. Residues 445-493 (AIILPTVIKFEIQLYKVREGKYLLDILRIDGPQFIFFDLCVAFLRELGV) form the KA1 domain.

It belongs to the protein kinase superfamily. CAMK Ser/Thr protein kinase family. SNF1 subfamily. Subunit of a probable heterotrimeric complex consisting of an alpha catalytic subunit, and a beta (KINB) and a gamma (KING or SNF4) non-catalytic regulatory subunits. Autophosphorylated. In terms of tissue distribution, expressed at very low levels.

The enzyme catalyses L-seryl-[protein] + ATP = O-phospho-L-seryl-[protein] + ADP + H(+). The catalysed reaction is L-threonyl-[protein] + ATP = O-phospho-L-threonyl-[protein] + ADP + H(+). Activated by phosphorylation at Thr-175. Its function is as follows. Catalytic subunit of the probable trimeric SNF1-related protein kinase (SnRK) complex, a central regulator of cellular energy homeostasis, which, in response to seemingly unrelated darkness, sugar and stress conditions, activates energy-producing pathways and inhibits energy-consuming processes. May also be involved in the regulation of fatty acid synthesis by phosphorylation of acetyl-CoA carboxylase and in assimilation of nitrogen by phosphorylating nitrate reductase. The sequence is that of SNF1-related protein kinase catalytic subunit alpha KIN12 from Arabidopsis thaliana (Mouse-ear cress).